A 1974-amino-acid polypeptide reads, in one-letter code: Protein Ycf2 (1974 aa).

Residues 219 to 246 (SQLKGSSYQSRDHLDSISNEDSEYHNQR) form a disordered region. 1308–1315 (GSIGTGRS) serves as a coordination point for ATP.

It belongs to the Ycf2 family.

It is found in the plastid. It localises to the chloroplast stroma. In terms of biological role, probable ATPase of unknown function. Its presence in a non-photosynthetic plant (Epifagus virginiana) and experiments in tobacco indicate that it has an essential function which is probably not related to photosynthesis. The protein is Protein Ycf2 of Jasminum nudiflorum (Winter jasmine).